The primary structure comprises 41 residues: Bacteriocin bavaricin-A (41 aa).

Belongs to the bacteriocin class IIA/YGNGV family.

It localises to the secreted. In terms of biological role, this heat stable bacteriocin shows activity against species of Lactobacillus, Listeria monocytogenes, Pediococcus, Enterococcus, Leuconostoc and Lactococcus. In Latilactobacillus sakei (Lactobacillus sakei), this protein is Bacteriocin bavaricin-A.